The primary structure comprises 300 residues: GTPase Era (300 aa).

The region spanning 4-173 (KYGIVAIVGK…INTIKNYLHK (170 aa)) is the Era-type G domain. The G1 stretch occupies residues 12-19 (GKPNVGKS). A GTP-binding site is contributed by 12–19 (GKPNVGKS). Positions 38–42 (QTTRN) are G2. The interval 59 to 62 (DTPG) is G3. Residues 59-63 (DTPGF) and 122-125 (SKAE) each bind GTP. The G4 stretch occupies residues 122 to 125 (SKAE). The interval 152-154 (ISA) is G5. Positions 204–282 (LNHEVPHGVG…SLTIFVKVEN (79 aa)) constitute a KH type-2 domain.

Belongs to the TRAFAC class TrmE-Era-EngA-EngB-Septin-like GTPase superfamily. Era GTPase family. Monomer.

The protein localises to the cytoplasm. It localises to the cell membrane. An essential GTPase that binds both GDP and GTP, with rapid nucleotide exchange. Plays a role in 16S rRNA processing and 30S ribosomal subunit biogenesis and possibly also in cell cycle regulation and energy metabolism. This chain is GTPase Era, found in Ureaplasma parvum serovar 3 (strain ATCC 27815 / 27 / NCTC 11736).